A 634-amino-acid chain; its full sequence is Probable potassium transport system protein Kup (634 aa).

Helical transmembrane passes span 19–39, 62–82, 113–133, 150–170, 177–197, 225–245, 259–279, 291–311, 349–369, 379–399, 406–426, and 431–451; these read AIGLMVGAVGVCYGDIGTSPL, VLSLIFWSLVWVVSIKYVIFV, FVVVAGLIGAALFYGDSMITP, GLEHWTVPLALIVLIGLFLIQ, IGILFGPVMVLWFGALAALGV, IGVAILGATVLALTGAEALYA, WFLLVLPALVLNYFGQGATIL, LLAPGWALLPMVALSTLATVI, IYIGGVNWALMVGVVLLVLGF, YGVAVTGTMLITTLLMGVVIW, LWLGVPFFCVMLAVDSLFFAA, and VIQGGAFPVIAGIVIFILMST.

This sequence belongs to the HAK/KUP transporter (TC 2.A.72) family.

The protein localises to the cell inner membrane. The catalysed reaction is K(+)(in) + H(+)(in) = K(+)(out) + H(+)(out). Transport of potassium into the cell. Likely operates as a K(+):H(+) symporter. The sequence is that of Probable potassium transport system protein Kup from Pseudomonas aeruginosa (strain LESB58).